We begin with the raw amino-acid sequence, 1188 residues long: uncharacterized protein (1188 aa).

Disordered regions lie at residues 126–468 (GDLR…SQME), 484–771 (EDRF…LYKP), 790–823 (ARGG…TDEL), and 847–1039 (QRAQ…FSRF). 3 stretches are compositionally biased toward pro residues: residues 139–151 (IPPP…PGPP), 159–193 (GGSP…PPPV), and 208–240 (IPTP…PAPA). The residue at position 260 (Ser-260) is a Phosphoserine. The segment covering 322–331 (EAPRKEEGAT) has biased composition (basic and acidic residues). A compositionally biased stretch (pro residues) spans 389 to 418 (TPPPAPPLPPPAPPLPPPAPPLPPAAPPLP). Over residues 432-441 (KTPKSSSPAL) the composition is skewed to low complexity. Basic and acidic residues-rich tracts occupy residues 501–514 (KEGK…EKET) and 566–583 (IRNE…KEAK). Residues 618-633 (LPPQSTTLLPTTSLQP) are compositionally biased toward low complexity. Residues 640-652 (AIPPKATPEPAIP) are compositionally biased toward pro residues. Phosphothreonine is present on Thr-666. Residues 689–703 (PAIASTATTLPTTTS) are compositionally biased toward low complexity. The segment covering 875–893 (AEASSDSIFHSQGTPNSFT) has biased composition (polar residues). Positions 920–931 (LGRDAEGTELSR) are enriched in basic and acidic residues. Positions 986 to 1001 (IPPPPEFSNDPEPPAP) are enriched in pro residues. Over residues 1007–1019 (GRQSSPPRNNYSD) the composition is skewed to polar residues. The segment covering 1026–1035 (AGPGAPPALG) has biased composition (low complexity). An Asymmetric dimethylarginine modification is found at Arg-1044. Residues 1069 to 1160 (GEPHRGPGLP…SPYTTTRYGS (92 aa)) form a disordered region. An omega-N-methylarginine mark is found at Arg-1073 and Arg-1084. Arg-1157 bears the Asymmetric dimethylarginine mark.

This is an uncharacterized protein from Homo sapiens (Human).